A 188-amino-acid chain; its full sequence is Elongation factor P (188 aa).

The protein belongs to the elongation factor P family.

Its subcellular location is the cytoplasm. It participates in protein biosynthesis; polypeptide chain elongation. Its function is as follows. Involved in peptide bond synthesis. Stimulates efficient translation and peptide-bond synthesis on native or reconstituted 70S ribosomes in vitro. Probably functions indirectly by altering the affinity of the ribosome for aminoacyl-tRNA, thus increasing their reactivity as acceptors for peptidyl transferase. The polypeptide is Elongation factor P (Exiguobacterium sibiricum (strain DSM 17290 / CCUG 55495 / CIP 109462 / JCM 13490 / 255-15)).